A 152-amino-acid chain; its full sequence is Interleukin-3 (152 aa).

Residues 1-19 (MSRLPVLLLLQLLVRPGLQ) form the signal peptide. N-linked (GlcNAc...) asparagine glycosylation is found at N34 and N89. Residues C35 and C103 are joined by a disulfide bond.

This sequence belongs to the IL-3 family. In terms of assembly, interacts with IL3RA. In terms of tissue distribution, activated T-cells, mast cells, natural killer cells.

Its subcellular location is the secreted. Functionally, cytokine secreted predominantly by activated T-lymphocytes as well as mast cells and osteoblastic cells that controls the production and differentiation of hematopoietic progenitor cells into lineage-restricted cells. Also stimulates mature basophils, eosinophils, and monocytes to become functionally activated. In addition, plays an important role in neural cell proliferation and survival. Participates as well in bone homeostasis and inhibits osteoclast differentiation by preventing NF-kappa-B nuclear translocation and activation. Mechanistically, exerts its biological effects through a receptor composed of IL3RA subunit and a signal transducing subunit IL3RB. Receptor stimulation results in the rapid activation of JAK2 kinase activity leading to STAT5-mediated transcriptional program. Alternatively, contributes to cell survival under oxidative stress in non-hematopoietic systems by activating pathways mediated by PI3K/AKT and ERK. The chain is Interleukin-3 from Homo sapiens (Human).